Consider the following 359-residue polypeptide: Spore germination protein GerQC (359 aa).

A signal peptide spans 1-16; the sequence is MKRWILFLILSVFLIG. Cys-17 carries N-palmitoyl cysteine lipidation. Cys-17 is lipidated: S-diacylglycerol cysteine.

It belongs to the GerABKC lipoprotein family.

The protein resides in the membrane. In terms of biological role, required for the germination response to inosine. Has no role in L-alanine germination. In Bacillus cereus, this protein is Spore germination protein GerQC (gerQC).